Consider the following 446-residue polypeptide: Probable glycine dehydrogenase (decarboxylating) subunit 1 (446 aa).

The protein belongs to the GcvP family. N-terminal subunit subfamily. The glycine cleavage system is composed of four proteins: P, T, L and H. In this organism, the P 'protein' is a heterodimer of two subunits.

It carries out the reaction N(6)-[(R)-lipoyl]-L-lysyl-[glycine-cleavage complex H protein] + glycine + H(+) = N(6)-[(R)-S(8)-aminomethyldihydrolipoyl]-L-lysyl-[glycine-cleavage complex H protein] + CO2. Its function is as follows. The glycine cleavage system catalyzes the degradation of glycine. The P protein binds the alpha-amino group of glycine through its pyridoxal phosphate cofactor; CO(2) is released and the remaining methylamine moiety is then transferred to the lipoamide cofactor of the H protein. This Desulforamulus reducens (strain ATCC BAA-1160 / DSM 100696 / MI-1) (Desulfotomaculum reducens) protein is Probable glycine dehydrogenase (decarboxylating) subunit 1.